A 668-amino-acid chain; its full sequence is BTB/POZ domain-containing protein At5g66560 (668 aa).

Residues 21–133 (SDIEIEVDDM…CYGVKMDLSA (113 aa)) form the BTB domain. The segment covering 73–84 (ETDKKGKGHEIE) has biased composition (basic and acidic residues). Positions 73-98 (ETDKKGKGHEIEDDKEEEEVEEQEIE) are disordered. Positions 85–98 (DDKEEEEVEEQEIE) are enriched in acidic residues. The NPH3 domain maps to 254 to 530 (ELWFEDLTQL…VQVLFFEQLQ (277 aa)). Phosphotyrosine is present on Y471.

Belongs to the NPH3 family.

Its pathway is protein modification; protein ubiquitination. Functionally, may act as a substrate-specific adapter of an E3 ubiquitin-protein ligase complex (CUL3-RBX1-BTB) which mediates the ubiquitination and subsequent proteasomal degradation of target proteins. The chain is BTB/POZ domain-containing protein At5g66560 from Arabidopsis thaliana (Mouse-ear cress).